The following is a 176-amino-acid chain: NAD(P)H-quinone oxidoreductase subunit J (176 aa).

It belongs to the complex I 30 kDa subunit family. NDH-1 can be composed of about 15 different subunits; different subcomplexes with different compositions have been identified which probably have different functions.

The protein resides in the cellular thylakoid membrane. It catalyses the reaction a plastoquinone + NADH + (n+1) H(+)(in) = a plastoquinol + NAD(+) + n H(+)(out). The enzyme catalyses a plastoquinone + NADPH + (n+1) H(+)(in) = a plastoquinol + NADP(+) + n H(+)(out). In terms of biological role, NDH-1 shuttles electrons from an unknown electron donor, via FMN and iron-sulfur (Fe-S) centers, to quinones in the respiratory and/or the photosynthetic chain. The immediate electron acceptor for the enzyme in this species is believed to be plastoquinone. Couples the redox reaction to proton translocation, and thus conserves the redox energy in a proton gradient. Cyanobacterial NDH-1 also plays a role in inorganic carbon-concentration. The sequence is that of NAD(P)H-quinone oxidoreductase subunit J from Prochlorococcus marinus subsp. pastoris (strain CCMP1986 / NIES-2087 / MED4).